The sequence spans 251 residues: HTH-type transcriptional regulator UlaR (251 aa).

Residues Glu-3 to Ala-58 enclose the HTH deoR-type domain. Residues Val-20–Asp-39 constitute a DNA-binding region (H-T-H motif).

Its subcellular location is the cytoplasm. Functionally, represses ulaG and the ulaABCDEF operon. The polypeptide is HTH-type transcriptional regulator UlaR (Shigella dysenteriae serotype 1 (strain Sd197)).